The primary structure comprises 153 residues: Deoxyuridine 5'-triphosphate nucleotidohydrolase (153 aa).

Substrate contacts are provided by residues R71–G73, N84, T88–D90, and K98.

It belongs to the dUTPase family. The cofactor is Mg(2+).

It catalyses the reaction dUTP + H2O = dUMP + diphosphate + H(+). It participates in pyrimidine metabolism; dUMP biosynthesis; dUMP from dCTP (dUTP route): step 2/2. Functionally, this enzyme is involved in nucleotide metabolism: it produces dUMP, the immediate precursor of thymidine nucleotides and it decreases the intracellular concentration of dUTP so that uracil cannot be incorporated into DNA. In Wolbachia pipientis wMel, this protein is Deoxyuridine 5'-triphosphate nucleotidohydrolase.